The sequence spans 151 residues: Probable cGMP 3',5'-cyclic phosphodiesterase subunit delta (151 aa).

Belongs to the PDE6D/unc-119 family. Interacts with Pde6.

It localises to the nucleus. The protein resides in the cytoplasm. The sequence is that of Probable cGMP 3',5'-cyclic phosphodiesterase subunit delta from Anopheles gambiae (African malaria mosquito).